The following is a 243-amino-acid chain: DNA repair protein RecO (243 aa).

This sequence belongs to the RecO family.

In terms of biological role, involved in DNA repair and RecF pathway recombination. This Thermobifida fusca (strain YX) protein is DNA repair protein RecO.